Consider the following 191-residue polypeptide: Ion-translocating oxidoreductase complex subunit B (191 aa).

The hydrophobic stretch occupies residues 1–26; the sequence is MSAVLIAVLALLALCLLGGAILGFAA. The 4Fe-4S domain maps to 32–90; the sequence is EGDPIAEQINALLPQTQCGQCGYPGCKPYAEAIAGGDKINKCPPGGEATIQALADLLDV. Residues Cys49, Cys52, Cys57, Cys73, Cys114, Cys117, Cys120, Cys124, Cys144, Cys147, Cys150, and Cys154 each contribute to the [4Fe-4S] cluster site. 4Fe-4S ferredoxin-type domains follow at residues 105–134 and 135–164; these read MVAYIREAECIGCTKCIQACPVDAIVGAAR and QMHTVIISECTGCDLCVEPCPVDCIDMIEV.

The protein belongs to the 4Fe4S bacterial-type ferredoxin family. RnfB subfamily. As to quaternary structure, the complex is composed of six subunits: RnfA, RnfB, RnfC, RnfD, RnfE and RnfG. Requires [4Fe-4S] cluster as cofactor.

It is found in the cell inner membrane. Its function is as follows. Part of a membrane-bound complex that couples electron transfer with translocation of ions across the membrane. The polypeptide is Ion-translocating oxidoreductase complex subunit B (Stutzerimonas stutzeri (strain A1501) (Pseudomonas stutzeri)).